A 297-amino-acid chain; its full sequence is Large ribosomal subunit protein uL24m (297 aa).

Serine 2 carries the N-acetylserine modification. Residues phenylalanine 63 to aspartate 96 form the KOW domain.

The protein belongs to the universal ribosomal protein uL24 family. In terms of assembly, component of the mitochondrial large ribosomal subunit (mt-LSU). Mature yeast 74S mitochondrial ribosomes consist of a small (37S) and a large (54S) subunit. The 37S small subunit contains a 15S ribosomal RNA (15S mt-rRNA) and 34 different proteins. The 54S large subunit contains a 21S rRNA (21S mt-rRNA) and 46 different proteins. uL24m forms the wall of the exit tunnel.

The protein resides in the mitochondrion. Functionally, component of the mitochondrial ribosome (mitoribosome), a dedicated translation machinery responsible for the synthesis of mitochondrial genome-encoded proteins, including at least some of the essential transmembrane subunits of the mitochondrial respiratory chain. The mitoribosomes are attached to the mitochondrial inner membrane and translation products are cotranslationally integrated into the membrane. The polypeptide is Large ribosomal subunit protein uL24m (MRPL40) (Saccharomyces cerevisiae (strain ATCC 204508 / S288c) (Baker's yeast)).